A 178-amino-acid polypeptide reads, in one-letter code: uncharacterized protein (178 aa).

It belongs to the mimivirus L114/R131 family.

This is an uncharacterized protein from Acanthamoeba polyphaga mimivirus (APMV).